Consider the following 351-residue polypeptide: Methionine import ATP-binding protein MetN (351 aa).

The 237-residue stretch at 2–238 (IKLNHINKTY…PKHPITRELI (237 aa)) folds into the ABC transporter domain. Residue 35–42 (GYSGAGKS) participates in ATP binding.

It belongs to the ABC transporter superfamily. Methionine importer (TC 3.A.1.24) family. The complex is composed of two ATP-binding proteins (MetN), two transmembrane proteins (MetI) and a solute-binding protein (MetQ).

The protein resides in the cell inner membrane. It catalyses the reaction L-methionine(out) + ATP + H2O = L-methionine(in) + ADP + phosphate + H(+). The enzyme catalyses D-methionine(out) + ATP + H2O = D-methionine(in) + ADP + phosphate + H(+). Its function is as follows. Part of the ABC transporter complex MetNIQ involved in methionine import. Responsible for energy coupling to the transport system. In Helicobacter hepaticus (strain ATCC 51449 / 3B1), this protein is Methionine import ATP-binding protein MetN.